The sequence spans 251 residues: Imidazole glycerol phosphate synthase subunit HisF (251 aa).

Catalysis depends on residues aspartate 12 and aspartate 131.

It belongs to the HisA/HisF family. Heterodimer of HisH and HisF.

The protein resides in the cytoplasm. It catalyses the reaction 5-[(5-phospho-1-deoxy-D-ribulos-1-ylimino)methylamino]-1-(5-phospho-beta-D-ribosyl)imidazole-4-carboxamide + L-glutamine = D-erythro-1-(imidazol-4-yl)glycerol 3-phosphate + 5-amino-1-(5-phospho-beta-D-ribosyl)imidazole-4-carboxamide + L-glutamate + H(+). It functions in the pathway amino-acid biosynthesis; L-histidine biosynthesis; L-histidine from 5-phospho-alpha-D-ribose 1-diphosphate: step 5/9. In terms of biological role, IGPS catalyzes the conversion of PRFAR and glutamine to IGP, AICAR and glutamate. The HisF subunit catalyzes the cyclization activity that produces IGP and AICAR from PRFAR using the ammonia provided by the HisH subunit. The sequence is that of Imidazole glycerol phosphate synthase subunit HisF from Streptomyces avermitilis (strain ATCC 31267 / DSM 46492 / JCM 5070 / NBRC 14893 / NCIMB 12804 / NRRL 8165 / MA-4680).